The chain runs to 233 residues: LexA repressor (233 aa).

The H-T-H motif DNA-binding region spans 26-46 (FDEMKDALDLRSKSGIHRLIT). Active-site for autocatalytic cleavage activity residues include Ser154 and Lys192.

It belongs to the peptidase S24 family. As to quaternary structure, homodimer.

It catalyses the reaction Hydrolysis of Ala-|-Gly bond in repressor LexA.. In terms of biological role, represses a number of genes involved in the response to DNA damage (SOS response), including recA and lexA. In the presence of single-stranded DNA, RecA interacts with LexA causing an autocatalytic cleavage which disrupts the DNA-binding part of LexA, leading to derepression of the SOS regulon and eventually DNA repair. The polypeptide is LexA repressor (Nitrobacter hamburgensis (strain DSM 10229 / NCIMB 13809 / X14)).